A 197-amino-acid chain; its full sequence is Elongation factor Ts (197 aa).

The involved in Mg(2+) ion dislocation from EF-Tu stretch occupies residues 81–84 (TDFV).

The protein belongs to the EF-Ts family.

The protein resides in the cytoplasm. Associates with the EF-Tu.GDP complex and induces the exchange of GDP to GTP. It remains bound to the aminoacyl-tRNA.EF-Tu.GTP complex up to the GTP hydrolysis stage on the ribosome. The sequence is that of Elongation factor Ts from Petrotoga mobilis (strain DSM 10674 / SJ95).